A 538-amino-acid polypeptide reads, in one-letter code: Putative cysteine ligase BshC (538 aa).

The protein belongs to the BshC family.

Functionally, involved in bacillithiol (BSH) biosynthesis. May catalyze the last step of the pathway, the addition of cysteine to glucosamine malate (GlcN-Mal) to generate BSH. The protein is Putative cysteine ligase BshC of Halalkalibacterium halodurans (strain ATCC BAA-125 / DSM 18197 / FERM 7344 / JCM 9153 / C-125) (Bacillus halodurans).